The primary structure comprises 89 residues: Large ribosomal subunit protein bL27 (89 aa).

A disordered region spans residues 1 to 21 (MAHKKAGGSSRNGRDTEGRRL).

The protein belongs to the bacterial ribosomal protein bL27 family.

This is Large ribosomal subunit protein bL27 from Granulibacter bethesdensis (strain ATCC BAA-1260 / CGDNIH1).